The following is a 107-amino-acid chain: Integration host factor subunit beta (107 aa).

Positions 54–107 are disordered; it reads NRRPARVGRNPKSGEKVQVPEKHVPHFKPGKELRERVDGRAGEPLKNDEPEDGQ. Residues 65-101 are compositionally biased toward basic and acidic residues; sequence KSGEKVQVPEKHVPHFKPGKELRERVDGRAGEPLKND.

It belongs to the bacterial histone-like protein family. In terms of assembly, heterodimer of an alpha and a beta chain.

In terms of biological role, this protein is one of the two subunits of integration host factor, a specific DNA-binding protein that functions in genetic recombination as well as in transcriptional and translational control. The sequence is that of Integration host factor subunit beta from Burkholderia thailandensis (strain ATCC 700388 / DSM 13276 / CCUG 48851 / CIP 106301 / E264).